A 359-amino-acid polypeptide reads, in one-letter code: Peptide chain release factor 1 (359 aa).

Glutamine 236 is subject to N5-methylglutamine.

The protein belongs to the prokaryotic/mitochondrial release factor family. Methylated by PrmC. Methylation increases the termination efficiency of RF1.

The protein localises to the cytoplasm. Its function is as follows. Peptide chain release factor 1 directs the termination of translation in response to the peptide chain termination codons UAG and UAA. The chain is Peptide chain release factor 1 from Streptococcus agalactiae serotype V (strain ATCC BAA-611 / 2603 V/R).